Consider the following 482-residue polypeptide: tRNA sulfurtransferase (482 aa).

The THUMP domain occupies 61 to 165; it reads DLVRDALTRI…DDRLLLVRGR (105 aa). ATP contacts are provided by residues 183–184, lysine 265, glycine 287, and glutamine 296; that span reads LI. A disulfide bridge connects residues cysteine 344 and cysteine 456. The Rhodanese domain occupies 404–482; sequence LAEGDVVLDI…GYDNVRVYRP (79 aa). The active-site Cysteine persulfide intermediate is the cysteine 456.

It belongs to the ThiI family.

The protein resides in the cytoplasm. The catalysed reaction is [ThiI sulfur-carrier protein]-S-sulfanyl-L-cysteine + a uridine in tRNA + 2 reduced [2Fe-2S]-[ferredoxin] + ATP + H(+) = [ThiI sulfur-carrier protein]-L-cysteine + a 4-thiouridine in tRNA + 2 oxidized [2Fe-2S]-[ferredoxin] + AMP + diphosphate. The enzyme catalyses [ThiS sulfur-carrier protein]-C-terminal Gly-Gly-AMP + S-sulfanyl-L-cysteinyl-[cysteine desulfurase] + AH2 = [ThiS sulfur-carrier protein]-C-terminal-Gly-aminoethanethioate + L-cysteinyl-[cysteine desulfurase] + A + AMP + 2 H(+). The protein operates within cofactor biosynthesis; thiamine diphosphate biosynthesis. Functionally, catalyzes the ATP-dependent transfer of a sulfur to tRNA to produce 4-thiouridine in position 8 of tRNAs, which functions as a near-UV photosensor. Also catalyzes the transfer of sulfur to the sulfur carrier protein ThiS, forming ThiS-thiocarboxylate. This is a step in the synthesis of thiazole, in the thiamine biosynthesis pathway. The sulfur is donated as persulfide by IscS. This Edwardsiella ictaluri (strain 93-146) protein is tRNA sulfurtransferase.